Here is a 424-residue protein sequence, read N- to C-terminus: Serine--tRNA ligase (424 aa).

230 to 232 (TAE) contacts L-serine. 261-263 (RAE) lines the ATP pocket. E284 contributes to the L-serine binding site. 348–351 (EISS) lines the ATP pocket. An L-serine-binding site is contributed by S384.

This sequence belongs to the class-II aminoacyl-tRNA synthetase family. Type-1 seryl-tRNA synthetase subfamily. Homodimer. The tRNA molecule binds across the dimer.

Its subcellular location is the cytoplasm. The enzyme catalyses tRNA(Ser) + L-serine + ATP = L-seryl-tRNA(Ser) + AMP + diphosphate + H(+). It catalyses the reaction tRNA(Sec) + L-serine + ATP = L-seryl-tRNA(Sec) + AMP + diphosphate + H(+). Its pathway is aminoacyl-tRNA biosynthesis; selenocysteinyl-tRNA(Sec) biosynthesis; L-seryl-tRNA(Sec) from L-serine and tRNA(Sec): step 1/1. Its function is as follows. Catalyzes the attachment of serine to tRNA(Ser). Is also able to aminoacylate tRNA(Sec) with serine, to form the misacylated tRNA L-seryl-tRNA(Sec), which will be further converted into selenocysteinyl-tRNA(Sec). The polypeptide is Serine--tRNA ligase (Carboxydothermus hydrogenoformans (strain ATCC BAA-161 / DSM 6008 / Z-2901)).